The sequence spans 732 residues: MFTAVNSNPNASESISGNSAFNFPSAPVSSLDTNNYGQRRPSLLSGTSPTSSFFNSSMISSNYTFPHGSNKQASLESPVSYSNPIPSLTWLSLDGDSPDSLVSTPTAPSANHHGNPFPNGKQSIKAMPSLVNLQEDSVISKFPNSLEVPFRKRSESTSSSLSGLHSDLRPLKTELYGQLNSECGARFPQTLKSPLTPIGGDSARTVSASTARTSDKFFPRHTRAHSDFWIPATSKPSRHASHSSIGDLTTITQSSISSGSGSFKPSWDGSFDSSLMAHQSYGTSPAFANGNSPTLKNDSSFFGSASVRPTVSPIGTSFRQSLPDISAFGIPKTETNPSEVVAPGTIPISVLPTSNFSAATPANPSLINQNGQEFLQQSRVLYLFHANKQRHFELSDILGNVVLFSTDQHGSRFIQQKLATATEEEREAVFQEIASTSCLQLMMDIFGNYVVQKYFEFGNEKQKQILLSQIKGHVFSLSLQMYGCRVVQKAIEYISPEHQVQLIQELDGHVLDCVCDQNGNHVIQKAIECIDTGHLQFILRALRPQIHVLSAHPYGCRVIQRAIEHCHSERKLIIEELLPHILKLTQDQYGNYVVQHILRTGSESDKKYIFDLMIDHLLFLSCHKFASNVVERCISYISDVDRRRILNKIISEKAENCSILMLMMKDKYANYVIQKLLDASPEEERDLLISYIYPHISVLKKFTYGKHLIMSVERFRQKSISAVPKLASKECK.

Residues 98–123 (PDSLVSTPTAPSANHHGNPFPNGKQS) are disordered. The span at 100–109 (SLVSTPTAPS) shows a compositional bias: polar residues. The PUM-HD domain maps to 376–716 (QQSRVLYLFH…HLIMSVERFR (341 aa)). Pumilio repeat units lie at residues 396 to 431 (DILG…AVFQ), 432 to 468 (EIAS…ILLS), 469 to 504 (QIKG…QLIQ), 505 to 540 (ELDG…FILR), 541 to 576 (ALRP…IIEE), 577 to 611 (LLPH…YIFD), 612 to 647 (LMID…RILN), and 655 to 690 (ENCS…LLIS).

This sequence belongs to the PUF3 family.

It is found in the mitochondrion outer membrane. Its subcellular location is the cytoplasm. Functionally, RNA-binding protein involved in post-transcriptional regulation. Predominantly binds to mRNAs encoding mitochondrial proteins and localizes them to the vicinity of mitochondria for translation. Regulates mitochondrial biogenesis, motility and morphology. The sequence is that of mRNA-binding protein puf3 (puf3) from Schizosaccharomyces pombe (strain 972 / ATCC 24843) (Fission yeast).